The following is a 243-amino-acid chain: Type III pantothenate kinase (243 aa).

An ATP-binding site is contributed by 7–14; that stretch reads DIGNTRLK. Substrate is bound by residues Tyr95 and 102–105; that span reads GIDR. Asp104 acts as the Proton acceptor in catalysis. Thr126 contacts ATP. Thr177 provides a ligand contact to substrate.

Belongs to the type III pantothenate kinase family. Homodimer. NH4(+) serves as cofactor. K(+) is required as a cofactor.

Its subcellular location is the cytoplasm. It catalyses the reaction (R)-pantothenate + ATP = (R)-4'-phosphopantothenate + ADP + H(+). Its pathway is cofactor biosynthesis; coenzyme A biosynthesis; CoA from (R)-pantothenate: step 1/5. Catalyzes the phosphorylation of pantothenate (Pan), the first step in CoA biosynthesis. The chain is Type III pantothenate kinase from Acinetobacter baylyi (strain ATCC 33305 / BD413 / ADP1).